The chain runs to 160 residues: Dihydrofolate reductase (160 aa).

The DHFR domain occupies 2–159 (TFSLIVATTL…YDCRFLILTR (158 aa)). Isoleucine 6 is a binding site for substrate. Residues alanine 8 and 14–20 (VIGKDNQ) contribute to the NADP(+) site. Aspartate 28 contacts substrate. NADP(+) is bound at residue 46-47 (KT). The substrate site is built by arginine 53 and arginine 58. NADP(+)-binding positions include 64–65 (SR) and 96–103 (GGGELFKQ). Substrate is bound at residue threonine 114.

Belongs to the dihydrofolate reductase family.

It carries out the reaction (6S)-5,6,7,8-tetrahydrofolate + NADP(+) = 7,8-dihydrofolate + NADPH + H(+). It participates in cofactor biosynthesis; tetrahydrofolate biosynthesis; 5,6,7,8-tetrahydrofolate from 7,8-dihydrofolate: step 1/1. Functionally, key enzyme in folate metabolism. Catalyzes an essential reaction for de novo glycine and purine synthesis, and for DNA precursor synthesis. The protein is Dihydrofolate reductase (folA) of Haemophilus influenzae (strain ATCC 51907 / DSM 11121 / KW20 / Rd).